We begin with the raw amino-acid sequence, 368 residues long: Protein RecA (368 aa).

Position 80–87 (80–87 (GPESSGKT)) interacts with ATP. Over residues 344 to 353 (NPTFTATPDS) the composition is skewed to polar residues. A disordered region spans residues 344–368 (NPTFTATPDSENADNADDEFSEEEL). Residues 354-368 (ENADNADDEFSEEEL) show a composition bias toward acidic residues.

Belongs to the RecA family.

The protein resides in the cytoplasm. In terms of biological role, can catalyze the hydrolysis of ATP in the presence of single-stranded DNA, the ATP-dependent uptake of single-stranded DNA by duplex DNA, and the ATP-dependent hybridization of homologous single-stranded DNAs. It interacts with LexA causing its activation and leading to its autocatalytic cleavage. The sequence is that of Protein RecA from Mannheimia haemolytica (Pasteurella haemolytica).